Consider the following 224-residue polypeptide: uncharacterized protein (224 aa).

An N-terminal signal peptide occupies residues 1-16; it reads MKILYSFLLLPFFSCA.

This is an uncharacterized protein from Escherichia coli.